Reading from the N-terminus, the 242-residue chain is Venom nerve growth factor (242 aa).

A signal peptide spans 1-18 (MSMMCYTLIIAFLIGIWA). A propeptide spanning residues 19–125 (APKSEDNVPL…TLNRNIRAKR (107 aa)) is cleaved from the precursor. Basic and acidic residues predominate over residues 47 to 66 (GLKTSRNTDQRHPAPKKAED). A disordered region spans residues 47–70 (GLKTSRNTDQRHPAPKKAEDQELG). Intrachain disulfides connect cysteine 139–cysteine 203, cysteine 181–cysteine 231, and cysteine 191–cysteine 233. N-linked (GlcNAc...) asparagine glycosylation is present at asparagine 166.

It belongs to the NGF-beta family. Homodimer; non-covalently linked. As to expression, expressed by the venom gland.

It localises to the secreted. In terms of biological role, nerve growth factor is important for the development and maintenance of the sympathetic and sensory nervous systems. It stimulates division and differentiation of sympathetic and embryonic sensory neurons as well as basal forebrain cholinergic neurons in the brain. Its relevance in the snake venom is not clear. However, it has been shown to inhibit metalloproteinase-dependent proteolysis of platelet glycoprotein Ib alpha, suggesting a metalloproteinase inhibition to prevent metalloprotease autodigestion and/or protection against prey proteases. Binds a lipid between the two protein chains in the homodimer. The lipid-bound form promotes histamine relase from mouse mast cells, contrary to the lipid-free form. This Drysdalia coronoides (White-lipped snake) protein is Venom nerve growth factor.